Reading from the N-terminus, the 475-residue chain is Adenosylhomocysteinase (475 aa).

Substrate contacts are provided by T61, D140, and E200. An NAD(+)-binding site is contributed by 201–203 (TTT). Substrate is bound by residues K230 and D234. NAD(+)-binding positions include N235, 264–269 (GYGDVG), E287, N322, 343–345 (IGH), and N388.

The protein belongs to the adenosylhomocysteinase family. NAD(+) is required as a cofactor.

The protein localises to the cytoplasm. The enzyme catalyses S-adenosyl-L-homocysteine + H2O = L-homocysteine + adenosine. It participates in amino-acid biosynthesis; L-homocysteine biosynthesis; L-homocysteine from S-adenosyl-L-homocysteine: step 1/1. Its function is as follows. May play a key role in the regulation of the intracellular concentration of adenosylhomocysteine. In Paracidovorax citrulli (strain AAC00-1) (Acidovorax citrulli), this protein is Adenosylhomocysteinase.